The following is a 211-amino-acid chain: Cyclin-dependent kinase inhibitor 3 (211 aa).

The segment at 1–20 (MKPPISIQASEFDSSDEEPV) is disordered. The tract at residues 1–34 (MKPPISIQASEFDSSDEEPVDEEQTPIQISWLPL) is interaction with CDK2. A Tyrosine-protein phosphatase domain is found at 32 to 200 (LPLSRVNCSQ…FRDKLAAYLS (169 aa)). Cys-140 acts as the Phosphocysteine intermediate in catalysis.

It belongs to the protein-tyrosine phosphatase family. In terms of assembly, interacts with cyclin-dependent kinases such as CDK1, CDK2 and CDK3. Does not interact with CDK4. Interacts (via C-terminus) with phosphorylated CDK2 (via C-terminal helix). Interacts with MS4A3 (via C-terminus); the interaction enhances CDKN3 enzymatic activity.

It is found in the cytoplasm. The protein resides in the perinuclear region. The catalysed reaction is O-phospho-L-tyrosyl-[protein] + H2O = L-tyrosyl-[protein] + phosphate. The enzyme catalyses O-phospho-L-seryl-[protein] + H2O = L-seryl-[protein] + phosphate. It carries out the reaction O-phospho-L-threonyl-[protein] + H2O = L-threonyl-[protein] + phosphate. In terms of biological role, may play a role in cell cycle regulation. Dual specificity phosphatase active toward substrates containing either phosphotyrosine or phosphoserine residues. Dephosphorylates CDK2 at 'Thr-160' in a cyclin-dependent manner. This Mus musculus (Mouse) protein is Cyclin-dependent kinase inhibitor 3.